The chain runs to 102 residues: EPIDERMAL PATTERNING FACTOR-like protein 9 (102 aa).

An N-terminal signal peptide occupies residues 1–31 (MKHEMMNIKPRCITIFFLLFALLLGNYVVQA). 3 disulfide bridges follow: Cys-65-Cys-98, Cys-70-Cys-77, and Cys-73-Cys-100.

This sequence belongs to the plant cysteine rich small secretory peptide family. Epidermal patterning factor subfamily. In terms of assembly, interacts with ERECTA and TMM. In terms of tissue distribution, expressed in immature organs, including leaves, stems and flower buds, but not in roots, shoot apical meristem and petals. Detected in the mesophyll tissues but not in the epidermal tissues where stomata develop.

It is found in the secreted. It localises to the extracellular space. Its subcellular location is the apoplast. In terms of biological role, positively regulates stomatal density and patterning. Acts by competing with EPF2 (AC Q8LC53) for the same receptors, ERECTA (AC Q42371) and TMM (AC Q9SSD1). Not cleaved by the protease CRSP (AC Q9LNU1). The sequence is that of EPIDERMAL PATTERNING FACTOR-like protein 9 from Arabidopsis thaliana (Mouse-ear cress).